The sequence spans 239 residues: Carboxy-S-adenosyl-L-methionine synthase (239 aa).

Residues tyrosine 35, 64–66 (GCS), 88–89 (DN), and arginine 195 contribute to the S-adenosyl-L-methionine site.

This sequence belongs to the class I-like SAM-binding methyltransferase superfamily. Cx-SAM synthase family. Homodimer.

The catalysed reaction is prephenate + S-adenosyl-L-methionine = carboxy-S-adenosyl-L-methionine + 3-phenylpyruvate + H2O. Functionally, catalyzes the conversion of S-adenosyl-L-methionine (SAM) to carboxy-S-adenosyl-L-methionine (Cx-SAM). This is Carboxy-S-adenosyl-L-methionine synthase from Helicobacter pylori (strain Shi470).